A 134-amino-acid chain; its full sequence is Lymphocyte antigen 6 complex locus protein G6d (134 aa).

The first 19 residues, 1-19 (MNSQLIGILFSALLGAALG), serve as a signal peptide directing secretion. The 100-residue stretch at 22–121 (MRCYDCGGGP…ASSSTPLCIL (100 aa)) folds into the UPAR/Ly6 domain. Cystine bridges form between cysteine 24/cysteine 48, cysteine 27/cysteine 35, cysteine 42/cysteine 76, cysteine 82/cysteine 101, and cysteine 102/cysteine 107. The O-linked (GalNAc...) threonine glycan is linked to threonine 68. Asparagine 108 carries the GPI-anchor amidated asparagine lipid modification. Residues 109–134 (GAVASSSTPLCILAAVTTLAWLLSGQ) constitute a propeptide, removed in mature form.

Homodimer. O-glycosylated.

The protein resides in the cell membrane. The polypeptide is Lymphocyte antigen 6 complex locus protein G6d (Ly6g6d) (Rattus norvegicus (Rat)).